Reading from the N-terminus, the 248-residue chain is NH(3)-dependent NAD(+) synthetase (248 aa).

G31–S38 is a binding site for ATP. Residue D37 participates in Mg(2+) binding. R114 contributes to the deamido-NAD(+) binding site. ATP is bound at residue T134. Residue E139 coordinates Mg(2+). Residues K147 and D154 each contribute to the deamido-NAD(+) site. ATP contacts are provided by K163 and S185. H236 to K237 provides a ligand contact to deamido-NAD(+).

It belongs to the NAD synthetase family. In terms of assembly, homodimer.

It catalyses the reaction deamido-NAD(+) + NH4(+) + ATP = AMP + diphosphate + NAD(+) + H(+). It participates in cofactor biosynthesis; NAD(+) biosynthesis; NAD(+) from deamido-NAD(+) (ammonia route): step 1/1. Its function is as follows. Catalyzes the ATP-dependent amidation of deamido-NAD to form NAD. Uses ammonia as a nitrogen source. This chain is NH(3)-dependent NAD(+) synthetase, found in Methanoregula boonei (strain DSM 21154 / JCM 14090 / 6A8).